A 288-amino-acid chain; its full sequence is Cyclin-dependent kinase 2 homolog (288 aa).

The 281-residue stretch at 4–284 (YHGLEKIGEG…AKQAIEHPYF (281 aa)) folds into the Protein kinase domain. Residues 10–18 (IGEGTYGVV) and Lys-32 each bind ATP. Thr-14 carries the post-translational modification Phosphothreonine. Tyr-15 is subject to Phosphotyrosine. The active-site Proton acceptor is Asp-125. Thr-158 carries the phosphothreonine modification.

Belongs to the protein kinase superfamily. CMGC Ser/Thr protein kinase family. CDC2/CDKX subfamily. As to quaternary structure, may form a complex composed of at least the catalytic subunit CRK2 and a cyclin. The cofactor is Mg(2+).

It is found in the cytoplasm. The catalysed reaction is L-seryl-[protein] + ATP = O-phospho-L-seryl-[protein] + ADP + H(+). It carries out the reaction L-threonyl-[protein] + ATP = O-phospho-L-threonyl-[protein] + ADP + H(+). It catalyses the reaction [DNA-directed RNA polymerase] + ATP = phospho-[DNA-directed RNA polymerase] + ADP + H(+). With respect to regulation, phosphorylation at Thr-14 or Tyr-15 inactivates the enzyme, while phosphorylation at Thr-158 activates it. In terms of biological role, serine/threonine-protein kinase. Involved in the control of the cell cycle. Required for entry into S-phase and mitosis. Probable component of the kinase complex that phosphorylates the repetitive C-terminus of RNA polymerase II. In Plasmodium berghei (strain Anka), this protein is Cyclin-dependent kinase 2 homolog.